A 403-amino-acid chain; its full sequence is uncharacterized protein (403 aa).

A run of 6 helical transmembrane segments spans residues 31–51 (FLIATIIGPLIIIALAIIGSF), 186–206 (LPIGFVFLLYMAISSLSGIIV), 238–258 (ISAVGLLQIGIWVLFALPIII), 268–288 (LAIFALIYFVLGYLFYSSLLC), 303–323 (LISPIIIIQIIPIMFMNTIMV), and 355–375 (LIEIVLSTAIMIVSIVISFIL).

The protein to B.subtilis YhaP.

The protein resides in the cell membrane. This is an uncharacterized protein from Methanocaldococcus jannaschii (strain ATCC 43067 / DSM 2661 / JAL-1 / JCM 10045 / NBRC 100440) (Methanococcus jannaschii).